We begin with the raw amino-acid sequence, 195 residues long: MNPVYSPGSSGVPYANAKGIGYPAGFPMGYAAAAPAYSPNMYPGANPTFQTGYTPGTPYKVSCSPTSGAVPPYSSSPNPYQTAVYPVRSAYPQQSPYAQQGTYYTQPLYAAPPHVIHHTTVVQPNGMPATVYPAPIPPPRGNGVTMGMVAGTTMAMSAGTLLTAHSPTPVAPHPVTVPTYRAPGTPTYSYVPPQW.

M1 carries the N-acetylmethionine modification. At 1–18 (MNPVYSPGSSGVPYANAK) the chain is on the cytoplasmic side. Position 6 is a phosphoserine (S6). The chain crosses the membrane as a helical span at residues 19–42 (GIGYPAGFPMGYAAAAPAYSPNMY). The Extracellular segment spans residues 43–142 (PGANPTFQTG…PAPIPPPRGN (100 aa)). N46 carries N-linked (GlcNAc...) asparagine glycosylation. Residues 143 to 164 (GVTMGMVAGTTMAMSAGTLLTA) form a helical membrane-spanning segment. Over 165 to 195 (HSPTPVAPHPVTVPTYRAPGTPTYSYVPPQW) the chain is Cytoplasmic.

Belongs to the FAM168 family. As to quaternary structure, may form homodimers. May interact with DAZAP2, FAM168A, PRDX6, RBM6, TMTC1 and YPEL2. Interacts with CDC27. N-glycosylated. In terms of tissue distribution, expressed in the brain, within neuronal axonal fibers and associated with myelin sheets (at protein level). Expression tends to be lower in the brain of Alzheimer disease patients compared to healthy individuals (at protein level).

Its subcellular location is the cytoplasm. The protein resides in the perinuclear region. The protein localises to the cell membrane. It is found in the cell projection. It localises to the axon. Functionally, inhibitor of neuronal axonal outgrowth. Acts as a negative regulator of CDC42 and STAT3 and a positive regulator of STMN2. Positive regulator of CDC27. The protein is Myelin-associated neurite-outgrowth inhibitor (FAM168B) of Homo sapiens (Human).